The chain runs to 482 residues: Adenylosuccinate lyase (482 aa).

Substrate-binding positions include 14–15 (RY), 82–84 (RHD), and 108–109 (TS). The Proton donor/acceptor role is filled by histidine 156. Glutamine 238 lines the substrate pocket. Serine 286 serves as the catalytic Proton donor/acceptor. Arginine 300, arginine 326, serine 331, and arginine 335 together coordinate substrate.

This sequence belongs to the lyase 1 family. Adenylosuccinate lyase subfamily. In terms of assembly, homotetramer. Residues from neighboring subunits contribute catalytic and substrate-binding residues to each active site.

It carries out the reaction N(6)-(1,2-dicarboxyethyl)-AMP = fumarate + AMP. It catalyses the reaction (2S)-2-[5-amino-1-(5-phospho-beta-D-ribosyl)imidazole-4-carboxamido]succinate = 5-amino-1-(5-phospho-beta-D-ribosyl)imidazole-4-carboxamide + fumarate. It participates in purine metabolism; AMP biosynthesis via de novo pathway; AMP from IMP: step 2/2. The protein operates within purine metabolism; IMP biosynthesis via de novo pathway; 5-amino-1-(5-phospho-D-ribosyl)imidazole-4-carboxamide from 5-amino-1-(5-phospho-D-ribosyl)imidazole-4-carboxylate: step 2/2. This Schizosaccharomyces pombe (strain 972 / ATCC 24843) (Fission yeast) protein is Adenylosuccinate lyase (ade8).